Consider the following 146-residue polypeptide: Leghemoglobin Lb120-8 (146 aa).

Positions 2 to 146 constitute a Globin domain; the sequence is GFTEKQEALV…LASAIKKAMN (145 aa). Nitrated tyrosine occurs at positions 24 and 29. Residue serine 44 coordinates heme b. Serine 44 bears the Phosphoserine mark. Histidine 61 contacts O2. Heme b contacts are provided by lysine 64, histidine 93, and lysine 96. Residue tyrosine 134 is modified to Nitrated tyrosine.

This sequence belongs to the plant globin family. Monomer. Nitrated in effective nodules and particularly in hypoxic conditions; this mechanism may play a protective role in the symbiosis by buffering toxic peroxynitrite NO(2)(-). Nitration level decrease during nodule senescence. In terms of processing, phosphorylation at Ser-44 disrupts the molecular environment of its porphyrin ring oxygen binding pocket, thus leading to a reduced oxygen consumption and to the delivery of oxygen O(2) to symbiosomes. Root nodules.

It localises to the cytoplasm. It is found in the cytosol. Its subcellular location is the nucleus. Functionally, leghemoglobin that reversibly binds oxygen O(2) through a pentacoordinated heme iron. In root nodules, facilitates the diffusion of oxygen to the bacteroids while preventing the bacterial nitrogenase from being inactivated by buffering dioxygen, nitric oxide and carbon monoxide, and promoting the formation of reactive oxygen species (ROS, e.g. H(2)O(2)). This role is essential for symbiotic nitrogen fixation (SNF). In Pisum sativum (Garden pea), this protein is Leghemoglobin Lb120-8.